The sequence spans 247 residues: tRNA uridine(34) hydroxylase (247 aa).

The Rhodanese domain maps to 124–218; the sequence is TKQDVIVIDT…YLEDTQNKNN (95 aa). Residue Cys-178 is the Cysteine persulfide intermediate of the active site.

It belongs to the TrhO family.

The enzyme catalyses uridine(34) in tRNA + AH2 + O2 = 5-hydroxyuridine(34) in tRNA + A + H2O. Its function is as follows. Catalyzes oxygen-dependent 5-hydroxyuridine (ho5U) modification at position 34 in tRNAs. The sequence is that of tRNA uridine(34) hydroxylase from Rickettsia africae (strain ESF-5).